A 267-amino-acid polypeptide reads, in one-letter code: Tryptophan synthase alpha chain (267 aa).

Residues Glu-49 and Asp-60 each act as proton acceptor in the active site.

The protein belongs to the TrpA family. In terms of assembly, tetramer of two alpha and two beta chains.

It catalyses the reaction (1S,2R)-1-C-(indol-3-yl)glycerol 3-phosphate + L-serine = D-glyceraldehyde 3-phosphate + L-tryptophan + H2O. It participates in amino-acid biosynthesis; L-tryptophan biosynthesis; L-tryptophan from chorismate: step 5/5. The alpha subunit is responsible for the aldol cleavage of indoleglycerol phosphate to indole and glyceraldehyde 3-phosphate. The chain is Tryptophan synthase alpha chain from Acidothermus cellulolyticus (strain ATCC 43068 / DSM 8971 / 11B).